The primary structure comprises 360 residues: Peptide chain release factor 1 (360 aa).

Glutamine 233 carries the post-translational modification N5-methylglutamine. The disordered stretch occupies residues 283–305 (KLDAERAADRRSQVGSGDRSERI).

Belongs to the prokaryotic/mitochondrial release factor family. Post-translationally, methylated by PrmC. Methylation increases the termination efficiency of RF1.

The protein resides in the cytoplasm. In terms of biological role, peptide chain release factor 1 directs the termination of translation in response to the peptide chain termination codons UAG and UAA. The chain is Peptide chain release factor 1 from Methylocella silvestris (strain DSM 15510 / CIP 108128 / LMG 27833 / NCIMB 13906 / BL2).